We begin with the raw amino-acid sequence, 638 residues long: Replication protein E1 (638 aa).

The Nuclear localization signal motif lies at 84–86 (KRK). At Ser-90 the chain carries Phosphoserine; by host. Residues 90 to 119 (SQNSPLQDITNQHRQQSDSQQNTHQVNNSQ) are compositionally biased toward polar residues. Positions 90 to 133 (SQNSPLQDITNQHRQQSDSQQNTHQVNNSQAKRRAVDSVPDSGY) are disordered. The DNA-binding region stretch occupies residues 176-342 (THVNSVTQIC…QTQLEHSFDD (167 aa)). The SF3 helicase domain occupies 441-591 (VNFIYFLQVL…FPFDSNGNPV (151 aa)). 467-474 (GPPNTGKS) lines the ATP pocket.

Belongs to the papillomaviridae E1 protein family. Can form hexamers. Interacts with E2 protein; this interaction increases E1 DNA binding specificity. Interacts with host DNA polymerase subunit POLA2. Interacts with host single stranded DNA-binding protein RPA1. Interacts with host TOP1; this interaction stimulates the enzymatic activity of TOP1. Post-translationally, phosphorylated.

The protein localises to the host nucleus. It carries out the reaction Couples ATP hydrolysis with the unwinding of duplex DNA by translocating in the 3'-5' direction.. It catalyses the reaction ATP + H2O = ADP + phosphate + H(+). Its function is as follows. ATP-dependent DNA 3'-5' helicase required for initiation of viral DNA replication. It forms a complex with the viral E2 protein. The E1-E2 complex binds to the replication origin which contains binding sites for both proteins. During the initial step, a dimer of E1 interacts with a dimer of protein E2 leading to a complex that binds the viral origin of replication with high specificity. Then, a second dimer of E1 displaces the E2 dimer in an ATP-dependent manner to form the E1 tetramer. Following this, two E1 monomers are added to each half of the site, which results in the formation of two E1 trimers on the viral ori. Subsequently, two hexamers will be created. The double hexamer acts as a bi-directional helicase machinery and unwinds the viral DNA and then recruits the host DNA polymerase to start replication. In Homo sapiens (Human), this protein is Replication protein E1.